A 464-amino-acid polypeptide reads, in one-letter code: ATP synthase subunit beta (464 aa).

Residue 153-160 (GGAGVGKT) participates in ATP binding.

It belongs to the ATPase alpha/beta chains family. F-type ATPases have 2 components, CF(1) - the catalytic core - and CF(0) - the membrane proton channel. CF(1) has five subunits: alpha(3), beta(3), gamma(1), delta(1), epsilon(1). CF(0) has three main subunits: a(1), b(2) and c(9-12). The alpha and beta chains form an alternating ring which encloses part of the gamma chain. CF(1) is attached to CF(0) by a central stalk formed by the gamma and epsilon chains, while a peripheral stalk is formed by the delta and b chains.

The protein resides in the cell inner membrane. The catalysed reaction is ATP + H2O + 4 H(+)(in) = ADP + phosphate + 5 H(+)(out). Its function is as follows. Produces ATP from ADP in the presence of a proton gradient across the membrane. The catalytic sites are hosted primarily by the beta subunits. In Burkholderia orbicola (strain MC0-3), this protein is ATP synthase subunit beta.